The sequence spans 478 residues: tRNA(Ile)-lysidine synthase (478 aa).

ATP is bound at residue 27-32; that stretch reads SGGSDS.

This sequence belongs to the tRNA(Ile)-lysidine synthase family.

It localises to the cytoplasm. The catalysed reaction is cytidine(34) in tRNA(Ile2) + L-lysine + ATP = lysidine(34) in tRNA(Ile2) + AMP + diphosphate + H(+). Its function is as follows. Ligates lysine onto the cytidine present at position 34 of the AUA codon-specific tRNA(Ile) that contains the anticodon CAU, in an ATP-dependent manner. Cytidine is converted to lysidine, thus changing the amino acid specificity of the tRNA from methionine to isoleucine. The chain is tRNA(Ile)-lysidine synthase from Rickettsia conorii (strain ATCC VR-613 / Malish 7).